The chain runs to 93 residues: M-zodatoxin-Lt5a (93 aa).

The N-terminal stretch at 1–22 (MKYCVVILALLVALVCITESRS) is a signal peptide. A propeptide spanning residues 23–64 (TETGYAVAETLEDNDLDELQAYLEEIAEASEMEDFSNIEEAR) is cleaved from the precursor. The Processing quadruplet motif motif lies at 61-64 (EEAR). Position 92 is a leucine amide (Leu-92).

Post-translationally, cleavage of the propeptide depends on the processing quadruplet motif (XXXR, with at least one of X being E). As to expression, expressed by the venom gland.

The protein resides in the secreted. In terms of biological role, has antimicrobial activity against. Gram-positive bacteria (A.globiformis VKM Ac-1112 (MIC=1.1 uM), and B.subtilis VKM B-501 (MIC=0.6 uM)), Gram-negative bacteria (E.coli DH5-alpha (MIC=0.6 uM), E.coli MH1 (MIC=0.6 uM), and P.aeruginosa PAO1 (MIC=18 uM)), and yeasts (P.pastoris GS115 (MIC&gt;37 uM), and S.cerevisiae Y190 (MIC&gt;37 uM)). Also has a moderate hemolytic activity against rabbit erythrocytes. Causes paralysis, but is not lethal when injected into insect (M.domestica) larvae. This chain is M-zodatoxin-Lt5a, found in Lachesana tarabaevi (Spider).